The following is a 40-amino-acid chain: Large ribosomal subunit protein bL36 (40 aa).

It belongs to the bacterial ribosomal protein bL36 family.

This is Large ribosomal subunit protein bL36 from Corynebacterium diphtheriae (strain ATCC 700971 / NCTC 13129 / Biotype gravis).